We begin with the raw amino-acid sequence, 140 residues long: Nucleoside diphosphate kinase (140 aa).

ATP is bound by residues lysine 9, phenylalanine 57, arginine 85, threonine 91, arginine 102, and asparagine 112. Residue histidine 115 is the Pros-phosphohistidine intermediate of the active site.

It belongs to the NDK family. As to quaternary structure, homotetramer. Mg(2+) serves as cofactor.

The protein localises to the cytoplasm. The enzyme catalyses a 2'-deoxyribonucleoside 5'-diphosphate + ATP = a 2'-deoxyribonucleoside 5'-triphosphate + ADP. It carries out the reaction a ribonucleoside 5'-diphosphate + ATP = a ribonucleoside 5'-triphosphate + ADP. Its function is as follows. Major role in the synthesis of nucleoside triphosphates other than ATP. The ATP gamma phosphate is transferred to the NDP beta phosphate via a ping-pong mechanism, using a phosphorylated active-site intermediate. This Chlorobaculum parvum (strain DSM 263 / NCIMB 8327) (Chlorobium vibrioforme subsp. thiosulfatophilum) protein is Nucleoside diphosphate kinase.